A 124-amino-acid chain; its full sequence is Ribonuclease P protein component (124 aa).

The protein belongs to the RnpA family. Consists of a catalytic RNA component (M1 or rnpB) and a protein subunit.

It catalyses the reaction Endonucleolytic cleavage of RNA, removing 5'-extranucleotides from tRNA precursor.. In terms of biological role, RNaseP catalyzes the removal of the 5'-leader sequence from pre-tRNA to produce the mature 5'-terminus. It can also cleave other RNA substrates such as 4.5S RNA. The protein component plays an auxiliary but essential role in vivo by binding to the 5'-leader sequence and broadening the substrate specificity of the ribozyme. The chain is Ribonuclease P protein component from Mycolicibacterium gilvum (strain PYR-GCK) (Mycobacterium gilvum (strain PYR-GCK)).